The following is a 475-amino-acid chain: Aspartyl/glutamyl-tRNA(Asn/Gln) amidotransferase subunit B (475 aa).

It belongs to the GatB/GatE family. GatB subfamily. In terms of assembly, heterotrimer of A, B and C subunits.

The enzyme catalyses L-glutamyl-tRNA(Gln) + L-glutamine + ATP + H2O = L-glutaminyl-tRNA(Gln) + L-glutamate + ADP + phosphate + H(+). It carries out the reaction L-aspartyl-tRNA(Asn) + L-glutamine + ATP + H2O = L-asparaginyl-tRNA(Asn) + L-glutamate + ADP + phosphate + 2 H(+). In terms of biological role, allows the formation of correctly charged Asn-tRNA(Asn) or Gln-tRNA(Gln) through the transamidation of misacylated Asp-tRNA(Asn) or Glu-tRNA(Gln) in organisms which lack either or both of asparaginyl-tRNA or glutaminyl-tRNA synthetases. The reaction takes place in the presence of glutamine and ATP through an activated phospho-Asp-tRNA(Asn) or phospho-Glu-tRNA(Gln). In Lysinibacillus sphaericus (strain C3-41), this protein is Aspartyl/glutamyl-tRNA(Asn/Gln) amidotransferase subunit B.